The sequence spans 134 residues: ATP synthase epsilon chain, chloroplastic (134 aa).

It belongs to the ATPase epsilon chain family. F-type ATPases have 2 components, CF(1) - the catalytic core - and CF(0) - the membrane proton channel. CF(1) has five subunits: alpha(3), beta(3), gamma(1), delta(1), epsilon(1). CF(0) has three main subunits: a, b and c.

It localises to the plastid. The protein resides in the chloroplast thylakoid membrane. Functionally, produces ATP from ADP in the presence of a proton gradient across the membrane. This Porphyra purpurea (Red seaweed) protein is ATP synthase epsilon chain, chloroplastic.